The chain runs to 778 residues: Kin of IRRE-like protein 3 (778 aa).

The N-terminal stretch at 1 to 21 is a signal peptide; that stretch reads MRPFQLDLLFLCFFLFSQELG. The Extracellular portion of the chain corresponds to 22–535; that stretch reads LQKRGCCLVL…GLEAESVPMA (514 aa). 5 consecutive Ig-like C2-type domains span residues 48–142, 147–243, 249–330, 335–415, and 419–515; these read YSFS…ARLT, PDDP…TSVT, PPLV…RTVD, PRMT…VTLT, and PPII…IRLK. C69 and C127 form a disulfide bridge. N-linked (GlcNAc...) asparagine glycosylation is present at N167. C170 and C227 are oxidised to a cystine. An N-linked (GlcNAc...) asparagine glycan is attached at N253. A disulfide bond links C271 and C314. A glycan (N-linked (GlcNAc...) asparagine) is linked at N324. Disulfide bonds link C356-C398 and C440-C499. N-linked (GlcNAc...) asparagine glycosylation is present at N498. Residues 536 to 556 traverse the membrane as a helical segment; the sequence is VIIGVAVGAGVAFLVLMATIV. The Cytoplasmic segment spans residues 557-778; that stretch reads AFCCARSQRN…PLQRRMQTHV (222 aa). A compositionally biased stretch (polar residues) spans 727 to 736; it reads CDSSVSSSGK. The interval 727 to 778 is disordered; that stretch reads CDSSVSSSGKQDGYVQFDKASKASASSSHHSQSSSQNSDPSRPLQRRMQTHV. Over residues 748-762 the composition is skewed to low complexity; the sequence is KASASSSHHSQSSSQ.

It belongs to the immunoglobulin superfamily. In terms of assembly, homodimer; mediates homophilic interactions to promote cell adhesion. Interacts with NPHS1; forms heterodimers with NPHS1. Interacts with NPHS2/podocin (via the C-terminus). Interacts with CASK. Interacts (via extracellular region) with MAP1B. Interacts (via extracellular region) with MYO16. Interacts (via intracellular region) with ATP1B1. Interacts (via intracellular region) with SHMT2. Interacts (via intracellular region) with UFC1. Post-translationally, undergoes proteolysis by a metalloprotease and gives rise to a soluble form. As to expression, expressed mainly in adult brain, bone marrow and stromal cells. Expressed in diverse regions of the brain, including the cortex, hippocampus, striatum, olfactory bulb and cerebellum. In brain, expressed in pontine nucleus neurons (at protein level). In hippocampus, produced in both the dentate granule neurons and the GABAergic neurons, but not the CA3 neurons. Expressed in subpopulations of vomeronasal sensory neurons. Expressed in a subset of neurons in dorsal root ganglia.

It is found in the cell membrane. The protein localises to the cell projection. Its subcellular location is the axon. The protein resides in the dendrite. It localises to the secreted. In terms of biological role, synaptic adhesion molecule required for the formation of target-specific synapses. Required for formation of target-specific synapses at hippocampal mossy fiber synapses. Required for formation of mossy fiber filopodia, the synaptic structures connecting dentate granule and GABA neurons. Probably acts as a homophilic adhesion molecule that promotes trans-cellular interactions and stabilize mossy fiber filipodia contact and subsequent synapse formation. Required for the coalescence of vomeronasal sensory neuron axons. May be involved in the hematopoietic supportive capacity of stroma cells; the secreted extracellular domain is directly responsible for supporting hematopoietic stem cells. The sequence is that of Kin of IRRE-like protein 3 (Kirrel3) from Mus musculus (Mouse).